The sequence spans 70 residues: Conotoxin TsMLKM-011 (70 aa).

The N-terminal stretch at 1 to 24 (MLKMGVVLFVFLVLFPLATLQLDA) is a signal peptide. A propeptide spanning residues 25–54 (DQPVERYAENKQLVSPYERRQIILHALGQR) is cleaved from the precursor. Disulfide bonds link Cys-56–Cys-66, Cys-57–Cys-68, and Cys-62–Cys-69.

The protein belongs to the conotoxin M superfamily. In terms of tissue distribution, expressed by the venom duct.

It is found in the secreted. This Conus tessulatus (Tessellate cone) protein is Conotoxin TsMLKM-011.